The chain runs to 288 residues: Probable anion import ATP-binding protein HVO_1886 (288 aa).

Positions 1–18 (MTTERPDAGDSGSEKPDE) are enriched in basic and acidic residues. The disordered stretch occupies residues 1-33 (MTTERPDAGDSGSEKPDETAAPDPAANGARRSK). The ABC transporter domain occupies 36 to 282 (LAARSLGHGF…PDDDRVRQFV (247 aa)). 68 to 75 (GPSGTGKT) is a binding site for ATP.

It belongs to the ABC transporter superfamily. As to quaternary structure, the complex is composed of two ATP-binding proteins (HVO_1886), two transmembrane proteins (HVO_1887) and a solute-binding protein (HVO_1888).

Its subcellular location is the cell membrane. Its function is as follows. Part of an ABC transporter complex involved in anions import. Responsible for energy coupling to the transport system. This Haloferax volcanii (strain ATCC 29605 / DSM 3757 / JCM 8879 / NBRC 14742 / NCIMB 2012 / VKM B-1768 / DS2) (Halobacterium volcanii) protein is Probable anion import ATP-binding protein HVO_1886.